A 197-amino-acid polypeptide reads, in one-letter code: MKLLHLYEASLKRRPKTTNAIMTGALFGIGDVSAQLLFPTSKVNKGYDYKRTARAVIYGSLIFSFIGDKWYKILNNKIYMRNRPQYHWSNMVLRVAVDQLAFAPLGLPFYFTCMSIMEGRSFDVAKLKIKEQWWPTLLTNWAVWPLFQAINFSVVPLQHRLLAVNVVAIFWNTYLSYKNSKVMEKDKVPVHYPPVVE.

4 helical membrane passes run 20–40, 55–75, 97–117, and 137–157; these read AIMT…LFPT, AVIY…KILN, VDQL…MSIM, and LLTN…VVPL.

The protein belongs to the peroxisomal membrane protein PXMP2/4 family.

The protein localises to the mitochondrion inner membrane. May be involved in cellular response to stress. Required to maintain mitochondrial DNA (mtDNA) integrity and stability. Required for ethanol metabolism and tolerance during heat shock. The sequence is that of Protein SYM1 (SYM1) from Saccharomyces cerevisiae (strain ATCC 204508 / S288c) (Baker's yeast).